The following is a 328-amino-acid chain: Bypass of stop codon protein 1 (328 aa).

The Flo11 domain maps to 1 to 155 (MSQQNILHYD…TYQCKGNNDG (155 aa)). Disordered regions lie at residues 168 to 259 (SSIT…VKSS) and 286 to 328 (TSTD…DPTT). Over residues 291 to 328 (TTLAASTSPFSSFTSSDSSSSSDVTSSTIQTTSVDPTT) the composition is skewed to low complexity.

The polypeptide is Bypass of stop codon protein 1 (BSC1) (Saccharomyces cerevisiae (strain ATCC 204508 / S288c) (Baker's yeast)).